We begin with the raw amino-acid sequence, 222 residues long: Ubiquitin-conjugating enzyme E2 S (222 aa).

N-acetylmethionine is present on methionine 1. The 147-residue stretch at 11-157 (HIIRLVYKEV…ARLLTEIHGG (147 aa)) folds into the UBC core domain. Cysteine 95 acts as the Glycyl thioester intermediate in catalysis. The segment at 156–222 (GGAGGPSGRA…TDKKRALRRL (67 aa)) is disordered. Position 173 is a phosphoserine (serine 173). The segment covering 208–222 (AAKKKTDKKRALRRL) has biased composition (basic residues).

Belongs to the ubiquitin-conjugating enzyme family. Component of the APC/C complex, composed of at least 14 distinct subunits that assemble into a complex of at least 19 chains with a combined molecular mass of around 1.2 MDa. Within this complex, directly interacts with ANAPC2 and ANAPC4. Interacts with CDC20, FZR1/CDH1 and VHL. Post-translationally, autoubiquitinated by the APC/C complex during G1, leading to its degradation by the proteasome.

The enzyme catalyses S-ubiquitinyl-[E1 ubiquitin-activating enzyme]-L-cysteine + [E2 ubiquitin-conjugating enzyme]-L-cysteine = [E1 ubiquitin-activating enzyme]-L-cysteine + S-ubiquitinyl-[E2 ubiquitin-conjugating enzyme]-L-cysteine.. It functions in the pathway protein modification; protein ubiquitination. Accepts ubiquitin from the E1 complex and catalyzes its covalent attachment to other proteins. Catalyzes 'Lys-11'-linked polyubiquitination. Acts as an essential factor of the anaphase promoting complex/cyclosome (APC/C), a cell cycle-regulated ubiquitin ligase that controls progression through mitosis. Acts by specifically elongating 'Lys-11'-linked polyubiquitin chains initiated by the E2 enzyme UBE2C/UBCH10 on APC/C substrates, enhancing the degradation of APC/C substrates by the proteasome and promoting mitotic exit. Also acts by elongating ubiquitin chains initiated by the E2 enzyme UBE2D1/UBCH5 in vitro; it is however unclear whether UBE2D1/UBCH5 acts as an E2 enzyme for the APC/C in vivo. Also involved in ubiquitination and subsequent degradation of VHL, resulting in an accumulation of HIF1A. In vitro able to promote polyubiquitination using all 7 ubiquitin Lys residues, except 'Lys-48'-linked polyubiquitination. The sequence is that of Ubiquitin-conjugating enzyme E2 S (UBE2S) from Homo sapiens (Human).